The primary structure comprises 139 residues: MTARIDDTAAEENPRAVARARFVRVTPMKARRVVELIKGRSASEALAVLQFAPQAASGPVSKVLASAVANAENNLSLDPDTLWVHRAYVDEGPTLKRFRPRAQGRAYRIRKRTSHITVEVESRPKKVASKSKSQKGSAR.

The disordered stretch occupies residues 118-139 (VEVESRPKKVASKSKSQKGSAR). Residues 125–139 (KKVASKSKSQKGSAR) are compositionally biased toward basic residues.

The protein belongs to the universal ribosomal protein uL22 family. Part of the 50S ribosomal subunit.

In terms of biological role, this protein binds specifically to 23S rRNA; its binding is stimulated by other ribosomal proteins, e.g. L4, L17, and L20. It is important during the early stages of 50S assembly. It makes multiple contacts with different domains of the 23S rRNA in the assembled 50S subunit and ribosome. Functionally, the globular domain of the protein is located near the polypeptide exit tunnel on the outside of the subunit, while an extended beta-hairpin is found that lines the wall of the exit tunnel in the center of the 70S ribosome. The protein is Large ribosomal subunit protein uL22 of Saccharopolyspora erythraea (strain ATCC 11635 / DSM 40517 / JCM 4748 / NBRC 13426 / NCIMB 8594 / NRRL 2338).